We begin with the raw amino-acid sequence, 393 residues long: Formate-dependent phosphoribosylglycinamide formyltransferase (393 aa).

Residues 22-23 (EL) and Glu-82 contribute to the N(1)-(5-phospho-beta-D-ribosyl)glycinamide site. Residues Arg-114, Lys-155, 160–165 (SSGKGQ), 195–198 (EGFV), and Glu-203 each bind ATP. The ATP-grasp domain occupies 119–308 (RLAAEELGLP…EFALHVRAIL (190 aa)). Mg(2+)-binding residues include Glu-267 and Glu-279. N(1)-(5-phospho-beta-D-ribosyl)glycinamide contacts are provided by residues Asp-286, Lys-356, and 363–364 (RR).

It belongs to the PurK/PurT family. Homodimer.

It carries out the reaction N(1)-(5-phospho-beta-D-ribosyl)glycinamide + formate + ATP = N(2)-formyl-N(1)-(5-phospho-beta-D-ribosyl)glycinamide + ADP + phosphate + H(+). It functions in the pathway purine metabolism; IMP biosynthesis via de novo pathway; N(2)-formyl-N(1)-(5-phospho-D-ribosyl)glycinamide from N(1)-(5-phospho-D-ribosyl)glycinamide (formate route): step 1/1. Its function is as follows. Involved in the de novo purine biosynthesis. Catalyzes the transfer of formate to 5-phospho-ribosyl-glycinamide (GAR), producing 5-phospho-ribosyl-N-formylglycinamide (FGAR). Formate is provided by PurU via hydrolysis of 10-formyl-tetrahydrofolate. This is Formate-dependent phosphoribosylglycinamide formyltransferase from Nitratidesulfovibrio vulgaris (strain ATCC 29579 / DSM 644 / CCUG 34227 / NCIMB 8303 / VKM B-1760 / Hildenborough) (Desulfovibrio vulgaris).